Consider the following 396-residue polypeptide: Methionine import ATP-binding protein MetN 2 (396 aa).

An ABC transporter domain is found at 41–280; the sequence is VSFELVGKVF…PRHGATRALL (240 aa). 77–84 provides a ligand contact to ATP; it reads GRSGAGKS.

The protein belongs to the ABC transporter superfamily. Methionine importer (TC 3.A.1.24) family. The complex is composed of two ATP-binding proteins (MetN), two transmembrane proteins (MetI) and a solute-binding protein (MetQ).

The protein resides in the cell inner membrane. It catalyses the reaction L-methionine(out) + ATP + H2O = L-methionine(in) + ADP + phosphate + H(+). The catalysed reaction is D-methionine(out) + ATP + H2O = D-methionine(in) + ADP + phosphate + H(+). Part of the ABC transporter complex MetNIQ involved in methionine import. Responsible for energy coupling to the transport system. The polypeptide is Methionine import ATP-binding protein MetN 2 (Burkholderia pseudomallei (strain K96243)).